Reading from the N-terminus, the 29-residue chain is Cytochrome b6-f complex subunit 8 (29 aa).

Residues 3–23 (ILSLGWAALMTMFTFSLALTV) traverse the membrane as a helical segment.

Belongs to the PetN family. As to quaternary structure, the 4 large subunits of the cytochrome b6-f complex are cytochrome b6, subunit IV (17 kDa polypeptide, PetD), cytochrome f and the Rieske protein, while the 4 small subunits are PetG, PetL, PetM and PetN. The complex functions as a dimer.

Its subcellular location is the plastid. The protein resides in the chloroplast thylakoid membrane. Functionally, component of the cytochrome b6-f complex, which mediates electron transfer between photosystem II (PSII) and photosystem I (PSI), cyclic electron flow around PSI, and state transitions. This Phaeodactylum tricornutum (strain CCAP 1055/1) protein is Cytochrome b6-f complex subunit 8.